A 572-amino-acid polypeptide reads, in one-letter code: Methionine--tRNA ligase (572 aa).

The 'HIGH' region signature appears at 11–21 (PYINGIKHLGN). Cys-143, Cys-146, Cys-156, and Cys-159 together coordinate Zn(2+). The 'KMSKS' region motif lies at 346 to 350 (QFSTS). Thr-349 is a binding site for ATP.

This sequence belongs to the class-I aminoacyl-tRNA synthetase family. MetG type 1 subfamily. Monomer. It depends on Zn(2+) as a cofactor.

It is found in the cytoplasm. It carries out the reaction tRNA(Met) + L-methionine + ATP = L-methionyl-tRNA(Met) + AMP + diphosphate. Is required not only for elongation of protein synthesis but also for the initiation of all mRNA translation through initiator tRNA(fMet) aminoacylation. The polypeptide is Methionine--tRNA ligase (Roseobacter denitrificans (strain ATCC 33942 / OCh 114) (Erythrobacter sp. (strain OCh 114))).